The chain runs to 243 residues: 3-deoxy-manno-octulosonate cytidylyltransferase (243 aa).

This sequence belongs to the KdsB family.

The protein resides in the cytoplasm. It catalyses the reaction 3-deoxy-alpha-D-manno-oct-2-ulosonate + CTP = CMP-3-deoxy-beta-D-manno-octulosonate + diphosphate. It functions in the pathway nucleotide-sugar biosynthesis; CMP-3-deoxy-D-manno-octulosonate biosynthesis; CMP-3-deoxy-D-manno-octulosonate from 3-deoxy-D-manno-octulosonate and CTP: step 1/1. It participates in bacterial outer membrane biogenesis; lipopolysaccharide biosynthesis. Functionally, activates KDO (a required 8-carbon sugar) for incorporation into bacterial lipopolysaccharide in Gram-negative bacteria. This is 3-deoxy-manno-octulosonate cytidylyltransferase from Bartonella quintana (strain Toulouse) (Rochalimaea quintana).